A 156-amino-acid polypeptide reads, in one-letter code: Ribosomal RNA large subunit methyltransferase H (156 aa).

Residues Leu-72, Gly-104, and 123–128 (LSEMTL) contribute to the S-adenosyl-L-methionine site.

Belongs to the RNA methyltransferase RlmH family. In terms of assembly, homodimer.

The protein localises to the cytoplasm. The enzyme catalyses pseudouridine(1915) in 23S rRNA + S-adenosyl-L-methionine = N(3)-methylpseudouridine(1915) in 23S rRNA + S-adenosyl-L-homocysteine + H(+). In terms of biological role, specifically methylates the pseudouridine at position 1915 (m3Psi1915) in 23S rRNA. The polypeptide is Ribosomal RNA large subunit methyltransferase H (Syntrophotalea carbinolica (strain DSM 2380 / NBRC 103641 / GraBd1) (Pelobacter carbinolicus)).